Reading from the N-terminus, the 145-residue chain is Hemoglobin subunit beta (145 aa).

The region spanning 1-145 (MLTAEEKAAV…VANALAHRYH (145 aa)) is the Globin domain. Thr11 bears the Phosphothreonine mark. At Ser43 the chain carries Phosphoserine. The residue at position 58 (Lys58) is an N6-acetyllysine. Heme b is bound at residue His62. Lys81 bears the N6-acetyllysine mark. Residue His91 participates in heme b binding. Position 92 is an S-nitrosocysteine (Cys92).

It belongs to the globin family. Heterotetramer of two alpha chains and two beta chains. Red blood cells.

Involved in oxygen transport from the lung to the various peripheral tissues. The polypeptide is Hemoglobin subunit beta (HBB) (Bos gaurus frontalis (Domestic gayal)).